Here is a 446-residue protein sequence, read N- to C-terminus: tRNA-2-methylthio-N(6)-dimethylallyladenosine synthase (446 aa).

An MTTase N-terminal domain is found at 3-120; that stretch reads KKLFIETHGC…LPEMIDAARS (118 aa). Cys12, Cys49, Cys83, Cys157, Cys161, and Cys164 together coordinate [4Fe-4S] cluster. The 233-residue stretch at 143–375 folds into the Radical SAM core domain; it reads RVDGPTAFVS…QSRIHQQGYE (233 aa). Residues 378-442 form the TRAM domain; the sequence is RRMVGSTQRI…PHSLRGTLID (65 aa).

The protein belongs to the methylthiotransferase family. MiaB subfamily. As to quaternary structure, monomer. [4Fe-4S] cluster serves as cofactor.

It is found in the cytoplasm. It catalyses the reaction N(6)-dimethylallyladenosine(37) in tRNA + (sulfur carrier)-SH + AH2 + 2 S-adenosyl-L-methionine = 2-methylsulfanyl-N(6)-dimethylallyladenosine(37) in tRNA + (sulfur carrier)-H + 5'-deoxyadenosine + L-methionine + A + S-adenosyl-L-homocysteine + 2 H(+). In terms of biological role, catalyzes the methylthiolation of N6-(dimethylallyl)adenosine (i(6)A), leading to the formation of 2-methylthio-N6-(dimethylallyl)adenosine (ms(2)i(6)A) at position 37 in tRNAs that read codons beginning with uridine. This Pseudomonas aeruginosa (strain UCBPP-PA14) protein is tRNA-2-methylthio-N(6)-dimethylallyladenosine synthase.